Consider the following 1384-residue polypeptide: Hepatocyte growth factor receptor (1384 aa).

The signal sequence occupies residues 1 to 24 (MKAPAVLAPGILVLLFTFVQKSNG). Residues 25–933 (ECKEALVKSR…VIVQPDQNFT (909 aa)) lie on the Extracellular side of the membrane. The Sema domain occupies 27-516 (KEALVKSRMN…TGKKITKIPL (490 aa)). N-linked (GlcNAc...) asparagine glycosylation is present at Asn-45. Cystine bridges form between Cys-95-Cys-101, Cys-98-Cys-160, Cys-133-Cys-141, and Cys-173-Cys-176. An N-linked (GlcNAc...) asparagine glycan is attached at Asn-106. An N-linked (GlcNAc...) asparagine glycan is attached at Asn-149. Residues Asn-203 and Asn-359 are each glycosylated (N-linked (GlcNAc...) asparagine). Cystine bridges form between Cys-299–Cys-364 and Cys-386–Cys-398. N-linked (GlcNAc...) asparagine glycans are attached at residues Asn-400 and Asn-406. 4 disulfide bridges follow: Cys-521/Cys-539, Cys-527/Cys-562, Cys-530/Cys-546, and Cys-542/Cys-552. IPT/TIG domains lie at 564 to 656 (PTIY…FSYV), 658 to 740 (PIIT…FIYR), and 743 to 837 (PIVY…LIYV). An O-linked (Man) threonine glycan is attached at Thr-583. 2 N-linked (GlcNAc...) asparagine glycosylation sites follow: Asn-608 and Asn-636. Thr-677 and Thr-762 each carry an O-linked (Man) threonine glycan. N-linked (GlcNAc...) asparagine glycans are attached at residues Asn-786, Asn-880, and Asn-931. The helical transmembrane segment at 934–956 (GLIVGVVSISIILLLLLGLFLWL) threads the bilayer. Over 957 to 1384 (KKRKQIKDLG…NVSGEDDDDT (428 aa)) the chain is Cytoplasmic. Ser-967 carries the phosphoserine modification. Thr-978 bears the Phosphothreonine mark. 3 positions are modified to phosphoserine: Ser-991, Ser-998, and Ser-1001. Tyr-1004 bears the Phosphotyrosine mark. Residues 1079 to 1346 (VHFNEVIGRG…RISVIFSTFI (268 aa)) form the Protein kinase domain. ATP contacts are provided by residues 1085 to 1093 (IGRGHFGCV) and Lys-1111. Asp-1205 functions as the Proton acceptor in the catalytic mechanism. Positions 1213–1382 (LDEKFTVKVA…QDNVSGEDDD (170 aa)) are interaction with RANBP9. Tyr-1231 carries the phosphotyrosine modification. Phosphotyrosine; by autocatalysis is present on residues Tyr-1235 and Tyr-1236. A Phosphothreonine modification is found at Thr-1290. Residues 1321–1360 (WHPKAELRPSFSELVSRISVIFSTFIGEHYVHVNATYVNV) are interaction with MUC20. Phosphotyrosine; by autocatalysis occurs at positions 1350 and 1357. Tyr-1366 is subject to Phosphotyrosine.

It belongs to the protein kinase superfamily. Tyr protein kinase family. Heterodimer made of an alpha chain (50 kDa) and a beta chain (145 kDa) which are disulfide linked. Binds PLXNB1. Interacts when phosphorylated with downstream effectors including STAT3, PIK3R1, SRC, PCLG1, GRB2 and GAB1. Interacts with SPSB1, SPSB2 and SPSB4. Interacts with INPP5D/SHIP1. When phosphorylated at Tyr-1357, interacts with INPPL1/SHIP2. Interacts with RANBP9 and RANBP10, as well as SPSB1, SPSB2, SPSB3 and SPSB4. SPSB1 binding occurs in the presence and in the absence of HGF, however HGF treatment has a positive effect on this interaction. Interacts with MUC20; prevents interaction with GRB2 and suppresses hepatocyte growth factor-induced cell proliferation. Interacts with GRB10. Interacts with PTPN1 and PTPN2. Interacts with HSP90AA1 and HSP90AB1; the interaction suppresses MET kinase activity. Interacts with tensin TNS3. Interacts (when phosphorylated) with tensin TNS4 (via SH2 domain); the interaction increases MET protein stability by inhibiting MET endocytosis and subsequent lysosomal degradation. Autophosphorylated in response to ligand binding on Tyr-1235 and Tyr-1236 in the kinase domain leading to further phosphorylation of Tyr-1350 and Tyr-1357 in the C-terminal multifunctional docking site. Dephosphorylated by PTPRJ at Tyr-1350 and Tyr-1366. Dephosphorylated by PTPN1 and PTPN2. In terms of processing, ubiquitinated. Ubiquitination by CBL regulates the receptor stability and activity through proteasomal degradation. Post-translationally, O-mannosylation of IPT/TIG domains by TMEM260 is required for protein maturation. O-mannosylated residues are composed of single mannose glycans that are not elongated or modified. Expressed in many tissues, including liver, lung, heart, spleen and mammary gland.

It localises to the membrane. It carries out the reaction L-tyrosyl-[protein] + ATP = O-phospho-L-tyrosyl-[protein] + ADP + H(+). With respect to regulation, in its inactive state, the C-terminal tail interacts with the catalytic domain and inhibits the kinase activity. Upon ligand binding, the C-terminal tail is displaced and becomes phosphorylated, thus increasing the kinase activity. Its function is as follows. Receptor tyrosine kinase that transduces signals from the extracellular matrix into the cytoplasm by binding to hepatocyte growth factor/HGF ligand. Regulates many physiological processes including proliferation, scattering, morphogenesis and survival. Ligand binding at the cell surface induces autophosphorylation of MET on its intracellular domain that provides docking sites for downstream signaling molecules. Following activation by ligand, interacts with the PI3-kinase subunit PIK3R1, PLCG1, SRC, GRB2, STAT3 or the adapter GAB1. Recruitment of these downstream effectors by MET leads to the activation of several signaling cascades including the RAS-ERK, PI3 kinase-AKT, or PLCgamma-PKC. The RAS-ERK activation is associated with the morphogenetic effects while PI3K/AKT coordinates prosurvival effects. During embryonic development, MET signaling plays a role in gastrulation, development and migration of muscles and neuronal precursors, angiogenesis and kidney formation. In adults, participates in wound healing as well as organ regeneration and tissue remodeling. Also promotes differentiation and proliferation of hematopoietic cells. This chain is Hepatocyte growth factor receptor (MET), found in Bos taurus (Bovine).